The primary structure comprises 303 residues: tRNA pseudouridine synthase B (303 aa).

Catalysis depends on aspartate 47, which acts as the Nucleophile.

It belongs to the pseudouridine synthase TruB family. Type 1 subfamily.

The enzyme catalyses uridine(55) in tRNA = pseudouridine(55) in tRNA. Its function is as follows. Responsible for synthesis of pseudouridine from uracil-55 in the psi GC loop of transfer RNAs. This chain is tRNA pseudouridine synthase B, found in Legionella pneumophila subsp. pneumophila (strain Philadelphia 1 / ATCC 33152 / DSM 7513).